Reading from the N-terminus, the 276-residue chain is Casein kinase II subunit beta-3 (276 aa).

Disordered regions lie at residues 1-22 (MYKE…LGGA) and 34-86 (KKLE…SEGD).

Belongs to the casein kinase 2 subunit beta family. In terms of assembly, heterotetramer of two catalytic alpha subunits and two regulatory beta subunits. Interacts with CCA1. Interacts with LHY. Post-translationally, phosphorylated by alpha subunit.

The protein localises to the cytoplasm. The protein resides in the cytosol. It is found in the nucleus. Plays a complex role in regulating the basal catalytic activity of the alpha subunit. The tetrameric holoenzyme CK2, composed of two alpha and two beta subunits, phosphorylates the transcription factor PIF1 after an exposure to light, resulting in a proteasome-dependent degradation of PIF1 and promotion of photomorphogenesis. CK2 phosphorylates translation initiation factors. May participate in the regulation of the initiation of translation. Stimulates the binding of CCA1 to promoters. The protein is Casein kinase II subunit beta-3 (CKB3) of Arabidopsis thaliana (Mouse-ear cress).